The chain runs to 79 residues: Methionine-rich peptide X (79 aa).

The N-terminal stretch at 1–22 is a signal peptide; that stretch reads MKKLAAVMLTSCLMVAVGASFA. The tract at residues 37–79 is disordered; sequence KKDDMAKDEMKKDSMAKDGMKKDAMKKDAMMKKDGMTKDEMKK.

Post-translationally, protein is oxidized (possibly on Met residues) when cells are exposed to chlorite or hypochlorite; initially the protein is highly oxidized, by 50 minutes all protein is in the reduced form.

It localises to the periplasm. Serves as an oxidative stress sink, specifically for chlorite and hypochlorite. This Azospira oryzae (strain ATCC BAA-33 / DSM 13638 / PS) (Dechlorosoma suillum) protein is Methionine-rich peptide X.